The chain runs to 662 residues: uncharacterized protein (662 aa).

The FAD site is built by Ser-145, Glu-164, Trp-173, Asp-184, and Tyr-190. The tract at residues 638-662 is disordered; the sequence is SRLETSGVPREGVQRPGSRLRRRPS.

The protein belongs to the FAD-binding monooxygenase family. Requires FAD as cofactor.

This is an uncharacterized protein from Sinorhizobium fredii (strain NBRC 101917 / NGR234).